Consider the following 264-residue polypeptide: ATP synthase subunit a (264 aa).

6 helical membrane passes run 29 to 49 (TWHI…LWLF), 89 to 109 (VIAP…FMDM), 134 to 154 (DLNI…YYSI), 177 to 197 (IPVN…SLAL), 208 to 228 (LIFI…ALGV), and 235 to 255 (LIFH…LTIV).

This sequence belongs to the ATPase A chain family. In terms of assembly, F-type ATPases have 2 components, CF(1) - the catalytic core - and CF(0) - the membrane proton channel. CF(1) has five subunits: alpha(3), beta(3), gamma(1), delta(1), epsilon(1). CF(0) has three main subunits: a(1), b(2) and c(9-12). The alpha and beta chains form an alternating ring which encloses part of the gamma chain. CF(1) is attached to CF(0) by a central stalk formed by the gamma and epsilon chains, while a peripheral stalk is formed by the delta and b chains.

The protein resides in the cell inner membrane. Functionally, key component of the proton channel; it plays a direct role in the translocation of protons across the membrane. The polypeptide is ATP synthase subunit a (Shewanella sediminis (strain HAW-EB3)).